The chain runs to 103 residues: Sec-independent protein translocase protein TatA (103 aa).

Residues 1 to 21 (MGNIFSPTHLIVILLIVLVLF) traverse the membrane as a helical segment. The segment at 60-103 (YSKTTDVRPQQSQPLSVKRAAERRKGSSSFKEGKASVAKKQRGK) is disordered.

The protein belongs to the TatA/E family. As to quaternary structure, the Tat system comprises two distinct complexes: a TatABC complex, containing multiple copies of TatA, TatB and TatC subunits, and a separate TatA complex, containing only TatA subunits. Substrates initially bind to the TatABC complex, which probably triggers association of the separate TatA complex to form the active translocon.

Its subcellular location is the cell inner membrane. Part of the twin-arginine translocation (Tat) system that transports large folded proteins containing a characteristic twin-arginine motif in their signal peptide across membranes. TatA could form the protein-conducting channel of the Tat system. The chain is Sec-independent protein translocase protein TatA from Bartonella quintana (strain Toulouse) (Rochalimaea quintana).